Consider the following 148-residue polypeptide: Lysozyme C (148 aa).

Residues 1–18 (MKALTILGLVLLSVTVQG) form the signal peptide. A C-type lysozyme domain is found at 19–148 (KIFERCELAR…VSQYVKGCGV (130 aa)). Intrachain disulfides connect cysteine 24/cysteine 146, cysteine 48/cysteine 134, cysteine 83/cysteine 99, and cysteine 95/cysteine 113. Active-site residues include glutamate 53 and aspartate 71.

The protein belongs to the glycosyl hydrolase 22 family. Monomer.

It is found in the secreted. The catalysed reaction is Hydrolysis of (1-&gt;4)-beta-linkages between N-acetylmuramic acid and N-acetyl-D-glucosamine residues in a peptidoglycan and between N-acetyl-D-glucosamine residues in chitodextrins.. Lysozymes have primarily a bacteriolytic function; those in tissues and body fluids are associated with the monocyte-macrophage system and enhance the activity of immunoagents. Also plays a role in digestion in this species. The protein is Lysozyme C (LYZ) of Semnopithecus entellus (Northern plains gray langur).